A 563-amino-acid polypeptide reads, in one-letter code: DNA mismatch repair protein MutL (563 aa).

This sequence belongs to the DNA mismatch repair MutL/HexB family.

In terms of biological role, this protein is involved in the repair of mismatches in DNA. It is required for dam-dependent methyl-directed DNA mismatch repair. May act as a 'molecular matchmaker', a protein that promotes the formation of a stable complex between two or more DNA-binding proteins in an ATP-dependent manner without itself being part of a final effector complex. This is DNA mismatch repair protein MutL from Trichormus variabilis (strain ATCC 29413 / PCC 7937) (Anabaena variabilis).